The sequence spans 463 residues: uncharacterized protein (463 aa).

It belongs to the mycobacterial PPE family.

This is an uncharacterized protein from Mycobacterium tuberculosis (strain CDC 1551 / Oshkosh).